We begin with the raw amino-acid sequence, 146 residues long: Probable trivalent organoarsenical cleaving enzyme (146 aa).

The 117-residue stretch at 2–118 (KYVHVGVNVV…DGNEWEFFYT (117 aa)) folds into the VOC domain. 2 residues coordinate Fe(2+): His-5 and His-62. Roxarsone (III) contacts are provided by Cys-95 and Cys-96. Glu-114 contributes to the Fe(2+) binding site.

The protein to M.tuberculosis Rv2641. The cofactor is Fe(2+).

It carries out the reaction methylarsonous acid + AH2 + O2 = arsenite + methanol + A + H(+). It catalyses the reaction roxarsone (III) + AH2 + O2 = 4-hydroxy-3-nitrocyclohexa-2,5-dien-1-one + arsenite + A + H(+). The catalysed reaction is nitarsone (III) + AH2 + O2 = 4-nitrocyclohexa-2,5-dien-1-one + arsenite + A + H(+). The enzyme catalyses 4-aminophenylarsonous acid + AH2 + O2 = 4-aminocyclohexa-2,5-dien-1-one + arsenite + A. In terms of biological role, nonheme iron-dependent dioxygenase that can break carbon-arsenic bonds, playing a role in the detoxification of environmental organoarsenical compounds. Catalyzes the oxygen-dependent demethylation of highly toxic methylarsonous acid (MAs(III)) to arsenite, which can then be exported out of the cell. Can also cleave the C-As bond in several trivalent aromatic arsenicals, including roxarsone (III), nitarsone (III) and (4-aminophenyl)arsonous acid. Organoarsenical degradation by this enzyme is proposed to have a significant impact on the arsenic biogeocycle that maintains a balance between organic and inorganic species. The chain is Probable trivalent organoarsenical cleaving enzyme (yqcK) from Bacillus subtilis (strain 168).